We begin with the raw amino-acid sequence, 29 residues long: NAD-reducing hydrogenase HoxS subunit delta (29 aa).

Positions 1–11 are enriched in basic and acidic residues; it reads MKHSEKNEIAS. The segment at 1–29 is disordered; sequence MKHSEKNEIASHELPTTPLDPVLAAGRES.

It belongs to the [NiFe]/[NiFeSe] hydrogenase small subunit family. As to quaternary structure, tetramer of an alpha and a gamma subunits (flavin-containing dimer), and a delta and a nickel-containing beta subunits (hydrogenase dimer). It depends on [4Fe-4S] cluster as a cofactor. The cofactor is [3Fe-4S] cluster. Requires [2Fe-2S] cluster as cofactor. FMN is required as a cofactor. Ni(2+) serves as cofactor.

It localises to the cytoplasm. It carries out the reaction H2 + NAD(+) = NADH + H(+). The polypeptide is NAD-reducing hydrogenase HoxS subunit delta (hoxY) (Rhodococcus opacus (Nocardia opaca)).